A 196-amino-acid chain; its full sequence is Orotate phosphoribosyltransferase (196 aa).

Residue Glu-117 to Ser-125 coordinates 5-phospho-alpha-D-ribose 1-diphosphate. Positions 121 and 149 each coordinate orotate.

This sequence belongs to the purine/pyrimidine phosphoribosyltransferase family. PyrE subfamily. In terms of assembly, homodimer. The cofactor is Mg(2+).

It carries out the reaction orotidine 5'-phosphate + diphosphate = orotate + 5-phospho-alpha-D-ribose 1-diphosphate. It functions in the pathway pyrimidine metabolism; UMP biosynthesis via de novo pathway; UMP from orotate: step 1/2. Catalyzes the transfer of a ribosyl phosphate group from 5-phosphoribose 1-diphosphate to orotate, leading to the formation of orotidine monophosphate (OMP). The chain is Orotate phosphoribosyltransferase from Sphingopyxis alaskensis (strain DSM 13593 / LMG 18877 / RB2256) (Sphingomonas alaskensis).